Consider the following 354-residue polypeptide: Guanine nucleotide-binding protein G(o) subunit alpha (354 aa).

The N-myristoyl glycine moiety is linked to residue Gly-2. Cys-3 is lipidated: S-palmitoyl cysteine. One can recognise a G-alpha domain in the interval 32–354; the sequence is KDVKLLLLGA…AYNLRGCGLY (323 aa). Residues 35–48 form a G1 motif region; that stretch reads KLLLLGAGESGKST. Positions 43, 46, 47, 48, 152, 176, 177, 178, and 179 each coordinate GTP. Ser-47 is a binding site for Mg(2+). The tract at residues 174–182 is G2 motif; the sequence is DILRTRVKT. Position 182 (Thr-182) interacts with Mg(2+). A G3 motif region spans residues 197 to 206; sequence FRLFDVGGQR. Positions 266–273 are G4 motif; sequence ILFLNKKD. GTP-binding residues include Asn-270, Asp-273, and Cys-325. The tract at residues 324–329 is G5 motif; that stretch reads TCATDT.

This sequence belongs to the G-alpha family. G(i/o/t/z) subfamily. G proteins are composed of 3 units; alpha, beta and gamma.

It catalyses the reaction GTP + H2O = GDP + phosphate + H(+). Guanine nucleotide-binding proteins (G proteins) function as transducers downstream of G protein-coupled receptors (GPCRs) in numerous signaling cascades. The alpha chain contains the guanine nucleotide binding site and alternates between an active, GTP-bound state and an inactive, GDP-bound state. Signaling by an activated GPCR promotes GDP release and GTP binding. The alpha subunit has a low GTPase activity that converts bound GTP to GDP, thereby terminating the signal. Both GDP release and GTP hydrolysis are modulated by numerous regulatory proteins. Signaling is mediated via effector proteins, such as adenylate cyclase. Inhibits adenylate cyclase activity, leading to decreased intracellular cAMP levels. This chain is Guanine nucleotide-binding protein G(o) subunit alpha (gna0), found in Xenopus laevis (African clawed frog).